We begin with the raw amino-acid sequence, 264 residues long: Cercarial protease (264 aa).

Positions 1–19 (MSNRWRFVVVVTLFTYCLT) are cleaved as a signal peptide. Residues 20-27 (FERVSTWL) constitute a propeptide that is removed on maturation. The 237-residue stretch at 28–264 (IRSGEPVQHP…RMLDFVRSNI (237 aa)) folds into the Peptidase S1 domain. A disulfide bridge links cysteine 53 with cysteine 69. Catalysis depends on charge relay system residues histidine 68 and aspartate 126. Cysteine 192 and cysteine 202 are oxidised to a cystine. The active-site Charge relay system is serine 218.

The protein belongs to the peptidase S1 family. In terms of tissue distribution, acetabular (penetration) glands.

Its activity is regulated as follows. Activated by an autocatalytic mechanism. This protease cleaves elastin and thus facilitates penetration of schistosome parasite larvae through elastin-rich tissue of the host. This is Cercarial protease from Schistosoma mansoni (Blood fluke).